A 206-amino-acid polypeptide reads, in one-letter code: N-(5'-phosphoribosyl)anthranilate isomerase (206 aa).

Belongs to the TrpF family.

The catalysed reaction is N-(5-phospho-beta-D-ribosyl)anthranilate = 1-(2-carboxyphenylamino)-1-deoxy-D-ribulose 5-phosphate. It functions in the pathway amino-acid biosynthesis; L-tryptophan biosynthesis; L-tryptophan from chorismate: step 3/5. This is N-(5'-phosphoribosyl)anthranilate isomerase from Pseudomonas syringae pv. syringae (strain B728a).